The following is a 69-amino-acid chain: Toxin CSTX-11 (69 aa).

4 disulfides stabilise this stretch: Cys6/Cys21, Cys13/Cys30, Cys20/Cys47, and Cys32/Cys45.

In terms of tissue distribution, expressed by the venom gland.

The protein localises to the secreted. The protein resides in the target cell membrane. In terms of biological role, spider venom toxin that shows calcium channel blocking activity and exhibits cytolytic activity by affecting the outer leaflet curvature and/or pore formation across the membrane. It blocks L-type calcium channels (Cav1/CACNA1) in mammalian neurons at nanomolar concentrations. Furthermore, it produces a slow voltage-independent block of mid/low and high voltage-activated calcium channels in cockroach neurons. Potassium ions, histamine, M-ctenitoxin-Cs1a (AC P83619), CSTX-9 (AC P58604), and CSTX-13 (AC P83919) synergistically increase the insecticidal activity of this toxin. In vivo, it causes paralysis in blow flies and provokes death in drosophila. The chain is Toxin CSTX-11 from Cupiennius salei (American wandering spider).